A 75-amino-acid chain; its full sequence is Putative membrane protein insertion efficiency factor (75 aa).

Belongs to the UPF0161 family.

The protein resides in the cell membrane. Its function is as follows. Could be involved in insertion of integral membrane proteins into the membrane. The protein is Putative membrane protein insertion efficiency factor (ytjA) of Bacillus subtilis (strain 168).